The primary structure comprises 45 residues: Large ribosomal subunit protein bL34 (45 aa).

The interval R26–A45 is disordered.

This sequence belongs to the bacterial ribosomal protein bL34 family.

The sequence is that of Large ribosomal subunit protein bL34 from Parafrankia sp. (strain EAN1pec).